Here is a 408-residue protein sequence, read N- to C-terminus: LL-diaminopimelate aminotransferase (408 aa).

Tyr-15 and Gly-42 together coordinate substrate. Pyridoxal 5'-phosphate contacts are provided by residues Tyr-72, Ser-108–Lys-109, Tyr-132, Asn-187, Tyr-218, and Ser-246–Ser-248. Lys-109, Tyr-132, and Asn-187 together coordinate substrate. Lys-249 carries the post-translational modification N6-(pyridoxal phosphate)lysine. 2 residues coordinate pyridoxal 5'-phosphate: Arg-257 and Asn-292. Positions 292 and 388 each coordinate substrate.

The protein belongs to the class-I pyridoxal-phosphate-dependent aminotransferase family. LL-diaminopimelate aminotransferase subfamily. Homodimer. Pyridoxal 5'-phosphate serves as cofactor.

The enzyme catalyses (2S,6S)-2,6-diaminopimelate + 2-oxoglutarate = (S)-2,3,4,5-tetrahydrodipicolinate + L-glutamate + H2O + H(+). The protein operates within amino-acid biosynthesis; L-lysine biosynthesis via DAP pathway; LL-2,6-diaminopimelate from (S)-tetrahydrodipicolinate (aminotransferase route): step 1/1. Involved in the synthesis of meso-diaminopimelate (m-DAP or DL-DAP), required for both lysine and peptidoglycan biosynthesis. Catalyzes the direct conversion of tetrahydrodipicolinate to LL-diaminopimelate. This Leptospira borgpetersenii serovar Hardjo-bovis (strain JB197) protein is LL-diaminopimelate aminotransferase.